We begin with the raw amino-acid sequence, 316 residues long: Acetyl-coenzyme A carboxylase carboxyl transferase subunit alpha (316 aa).

Positions 24–291 constitute a CoA carboxyltransferase C-terminal domain; sequence NIKDKADIVD…KEALIQQLNE (268 aa).

The protein belongs to the AccA family. In terms of assembly, acetyl-CoA carboxylase is a heterohexamer composed of biotin carboxyl carrier protein (AccB), biotin carboxylase (AccC) and two subunits each of ACCase subunit alpha (AccA) and ACCase subunit beta (AccD).

The protein localises to the cytoplasm. It carries out the reaction N(6)-carboxybiotinyl-L-lysyl-[protein] + acetyl-CoA = N(6)-biotinyl-L-lysyl-[protein] + malonyl-CoA. It functions in the pathway lipid metabolism; malonyl-CoA biosynthesis; malonyl-CoA from acetyl-CoA: step 1/1. Component of the acetyl coenzyme A carboxylase (ACC) complex. First, biotin carboxylase catalyzes the carboxylation of biotin on its carrier protein (BCCP) and then the CO(2) group is transferred by the carboxyltransferase to acetyl-CoA to form malonyl-CoA. The sequence is that of Acetyl-coenzyme A carboxylase carboxyl transferase subunit alpha from Ruthia magnifica subsp. Calyptogena magnifica.